Consider the following 354-residue polypeptide: Anthranilate phosphoribosyltransferase (354 aa).

Residues Gly94, Gly97–Asp98, Thr102, Asn104–Thr107, Lys122–Ser130, and Ser134 each bind 5-phospho-alpha-D-ribose 1-diphosphate. Gly94 is a binding site for anthranilate. Ser106 lines the Mg(2+) pocket. Asn125 lines the anthranilate pocket. Arg180 contacts anthranilate. Residues Asp238 and Glu239 each contribute to the Mg(2+) site.

The protein belongs to the anthranilate phosphoribosyltransferase family. As to quaternary structure, homodimer. Mg(2+) is required as a cofactor.

It carries out the reaction N-(5-phospho-beta-D-ribosyl)anthranilate + diphosphate = 5-phospho-alpha-D-ribose 1-diphosphate + anthranilate. It functions in the pathway amino-acid biosynthesis; L-tryptophan biosynthesis; L-tryptophan from chorismate: step 2/5. Its function is as follows. Catalyzes the transfer of the phosphoribosyl group of 5-phosphorylribose-1-pyrophosphate (PRPP) to anthranilate to yield N-(5'-phosphoribosyl)-anthranilate (PRA). The protein is Anthranilate phosphoribosyltransferase of Streptomyces avermitilis (strain ATCC 31267 / DSM 46492 / JCM 5070 / NBRC 14893 / NCIMB 12804 / NRRL 8165 / MA-4680).